The sequence spans 284 residues: tRNA pseudouridine synthase A (284 aa).

Catalysis depends on aspartate 62, which acts as the Nucleophile. Tyrosine 123 is a substrate binding site.

It belongs to the tRNA pseudouridine synthase TruA family. In terms of assembly, homodimer.

It catalyses the reaction uridine(38/39/40) in tRNA = pseudouridine(38/39/40) in tRNA. Its function is as follows. Formation of pseudouridine at positions 38, 39 and 40 in the anticodon stem and loop of transfer RNAs. This is tRNA pseudouridine synthase A from Streptomyces griseus subsp. griseus (strain JCM 4626 / CBS 651.72 / NBRC 13350 / KCC S-0626 / ISP 5235).